The sequence spans 509 residues: Cytochrome P450 monooxygenase ARMGADRAFT_974139 (509 aa).

Residues 4–24 form a helical membrane-spanning segment; the sequence is ASLAVVVWAILLVLWLRRIFG. Asparagine 96 and asparagine 279 each carry an N-linked (GlcNAc...) asparagine glycan. Cysteine 439 contributes to the heme binding site.

This sequence belongs to the cytochrome P450 family. It depends on heme as a cofactor.

The protein localises to the membrane. It functions in the pathway secondary metabolite biosynthesis. In terms of biological role, cytochrome P450 monooxygenase, part of the gene cluster that mediates the biosynthesis of melleolides, a range of antifungal and phytotoxic polyketide derivatives composed of an orsellinic acid (OA) moiety esterified to various sesquiterpene alcohols. The first step in melleolides biosynthesis is performed by the delta(6)-protoilludene synthase PRO1 which catalyzes the cyclization of farnesyl diphosphate to protoilludene. The orsellinic acid synthase armB produces OA by condensing acetyl-CoA with 3 malonyl-CoA units in a three-round chain elongation reaction folowed by a C2-C7 ring closure. ArmB further catalyzes the trans-esterification of OA to the various sesquiterpene alcohols resulting from the hydroxylation of protoilludene. The melleolides cluster also includes 5 cytochrome P450 monooxygenases, 4 NAD(+)-dependent oxidoreductases, one flavin-dependent oxidoreductase, and one O-methyltransferase. The cytochrome P450 monooxygenases may be involved in protoilludene hydroxylation to elaborate melleolides with multiple alcohol groups, such as melleolide D, which carries alcohol functionalities at C-4, C-5, C-10, and C-13. The role of the NAD(+)-dependent enzymes remains unknown. Numerous melleolides, including arnamial, show 5'-O-methylation of the aromatic moiety which may be catalyzed by the methyltransferase encoded in the cluster. The flavin-dependent oxidoreductase might represent the dehydrogenase yielding the aldehyde in position 1 of arnamial and other melleolides. Finally, several halogenase localized outside of the cluster, are able to catalyze the transfer of a single chlorine atom to the melleolide backbone, resulting in a 6'-chloromelleolide product. This is Cytochrome P450 monooxygenase ARMGADRAFT_974139 from Armillaria gallica (Bulbous honey fungus).